We begin with the raw amino-acid sequence, 434 residues long: Autophagy-related protein 18 (434 aa).

WD repeat units follow at residues 1-34 (MNYV…KIFT), 183-223 (AHRA…KLYQ), and 228-267 (TYPS…TGLP). The L/FRRG motif motif lies at 224-228 (FRRGT). The segment at 262–318 (PVTGLPESPQSPGDKDKWRRSRSFDSENGSPPAGISPGSEMADVPAEKSKSSGTFGS) is disordered. Positions 274–286 (GDKDKWRRSRSFD) are enriched in basic and acidic residues. The stretch at 367–407 (PRSGPVKSVVAMSSSSPQVMVVTSDGGFYIYSIDMETGGEG) is one WD 4 repeat.

It belongs to the WD repeat PROPPIN family. In terms of assembly, component of the PI(3,5)P2 regulatory complex.

It localises to the preautophagosomal structure membrane. Its subcellular location is the vacuole membrane. The protein localises to the endosome membrane. Functionally, the PI(3,5)P2 regulatory complex regulates both the synthesis and turnover of phosphatidylinositol 3,5-bisphosphate (PtdIns(3,5)P2). Necessary for proper vacuole morphology. Plays an important role in osmotically-induced vacuole fragmentation. Required for cytoplasm to vacuole transport (Cvt) vesicle formation, pexophagy and starvation-induced autophagy. Involved in correct atg9 trafficking to the pre-autophagosomal structure. Might also be involved in premeiotic DNA replication. The protein is Autophagy-related protein 18 (atg18) of Botryotinia fuckeliana (strain B05.10) (Noble rot fungus).